The following is a 551-amino-acid chain: MNRRRFIKGSMAMAAVCGSSGIASLFSQAAFAAESDIADGKIVRFDFAGLQSMAQALAKKPWGGAPGPLPDTLANLTPQAYNSIQYDAAHSLWNGVANRQLDIQFFHVGMGFRRRVRMFSVDTTTHLAREIHFRPELFKYNDAGVDTTQLEGQSDLGFAGFRVFKAPELARRDVVSFLGASYFRAVDDTYQYGLSARGLAIDTYTDGQEEFPDFTAFWFDTAKPGDTTFTVYALLDSASVTGAYKFVIHCEKSQVIMDVENHLYARKDIKQLGIAPMTSMFSCGNNERRVCDTIHPQIHDSDRLAMWRGNGEWICRPLNNPQKLQFNAYMDDNPKGFGLLQLDRDFSHYQDVMGWYNKRPSLWVEPRNKWGKGAVSLMEIPTTGETLDNVVCFWQPEKAIKAGDTLAFNYRLYWSAQPPVQSPLARVMATRTGMGGFPEGWAPGEHYPDKWARRFAIDFVGGDLKAAAPKGIEPVITLSSGEAKQIEILYVEPFDGYRIQFDWYPTSDSTAPVDMRMFLRCQGEAISETWLYQYFPPAPDKRRYVDDRIMR.

The segment at residues 1-32 is a signal peptide (tat-type signal); that stretch reads MNRRRFIKGSMAMAAVCGSSGIASLFSQAAFA.

Belongs to the OpgD/OpgG family. In terms of processing, predicted to be exported by the Tat system. The position of the signal peptide cleavage has not been experimentally proven.

The protein localises to the periplasm. It functions in the pathway glycan metabolism; osmoregulated periplasmic glucan (OPG) biosynthesis. Functionally, probably involved in the control of the structural glucose backbone of osmoregulated periplasmic glucans (OPGs). The protein is Glucans biosynthesis protein D (mdoD) of Salmonella typhimurium (strain LT2 / SGSC1412 / ATCC 700720).